Reading from the N-terminus, the 261-residue chain is Cytochrome c oxidase subunit 3 (261 aa).

Residues 1 to 15 (MTHQTHAYHMVNPSP) lie on the Mitochondrial matrix side of the membrane. The helical transmembrane segment at 16-34 (WPLTGALSALLMTSGLIMW) threads the bilayer. At 35–40 (FHFNST) the chain is on the mitochondrial intermembrane side. Residues 41–66 (TLLMLGLTTNMLTMYQWWRDIIREST) traverse the membrane as a helical segment. The Mitochondrial matrix segment spans residues 67 to 72 (FQGHHT). Residues 73 to 105 (PNVQKGLRYGMILFIISEVLFFTGFFWAFYHSS) traverse the membrane as a helical segment. The Mitochondrial intermembrane segment spans residues 106-128 (LAPTPELGGCWPPTGIHPLNPLE). The helical transmembrane segment at 129–152 (VPLLNTSVLLASGVSITWAHHSLM) threads the bilayer. Topologically, residues 153–155 (EGN) are mitochondrial matrix. Residues 156 to 183 (RNHMLQALFITIALGVYFTLLQASEYYE) traverse the membrane as a helical segment. Topologically, residues 184 to 190 (APFTISD) are mitochondrial intermembrane. The chain crosses the membrane as a helical span at residues 191-223 (GVYGSTFFVATGFHGLHVIIGSTFLIVCFFRQL). Over 224–232 (KFHFTSSHH) the chain is Mitochondrial matrix. The chain crosses the membrane as a helical span at residues 233-256 (FGFEAAAWYWHFVDVVWLFLYVSI). The Mitochondrial intermembrane portion of the chain corresponds to 257–261 (YWWGS).

It belongs to the cytochrome c oxidase subunit 3 family. Component of the cytochrome c oxidase (complex IV, CIV), a multisubunit enzyme composed of 14 subunits. The complex is composed of a catalytic core of 3 subunits MT-CO1, MT-CO2 and MT-CO3, encoded in the mitochondrial DNA, and 11 supernumerary subunits COX4I, COX5A, COX5B, COX6A, COX6B, COX6C, COX7A, COX7B, COX7C, COX8 and NDUFA4, which are encoded in the nuclear genome. The complex exists as a monomer or a dimer and forms supercomplexes (SCs) in the inner mitochondrial membrane with NADH-ubiquinone oxidoreductase (complex I, CI) and ubiquinol-cytochrome c oxidoreductase (cytochrome b-c1 complex, complex III, CIII), resulting in different assemblies (supercomplex SCI(1)III(2)IV(1) and megacomplex MCI(2)III(2)IV(2)).

Its subcellular location is the mitochondrion inner membrane. It carries out the reaction 4 Fe(II)-[cytochrome c] + O2 + 8 H(+)(in) = 4 Fe(III)-[cytochrome c] + 2 H2O + 4 H(+)(out). In terms of biological role, component of the cytochrome c oxidase, the last enzyme in the mitochondrial electron transport chain which drives oxidative phosphorylation. The respiratory chain contains 3 multisubunit complexes succinate dehydrogenase (complex II, CII), ubiquinol-cytochrome c oxidoreductase (cytochrome b-c1 complex, complex III, CIII) and cytochrome c oxidase (complex IV, CIV), that cooperate to transfer electrons derived from NADH and succinate to molecular oxygen, creating an electrochemical gradient over the inner membrane that drives transmembrane transport and the ATP synthase. Cytochrome c oxidase is the component of the respiratory chain that catalyzes the reduction of oxygen to water. Electrons originating from reduced cytochrome c in the intermembrane space (IMS) are transferred via the dinuclear copper A center (CU(A)) of subunit 2 and heme A of subunit 1 to the active site in subunit 1, a binuclear center (BNC) formed by heme A3 and copper B (CU(B)). The BNC reduces molecular oxygen to 2 water molecules using 4 electrons from cytochrome c in the IMS and 4 protons from the mitochondrial matrix. This is Cytochrome c oxidase subunit 3 (MT-CO3) from Litocranius walleri (Gerenuk).